The primary structure comprises 442 residues: Cyclic adenylate deaminase (442 aa).

It belongs to the metallo-dependent hydrolases superfamily. Adenosine and AMP deaminases family. It depends on Zn(2+) as a cofactor.

It carries out the reaction 3',5'-cyclic AMP + H2O + H(+) = 3',5'-cyclic IMP + NH4(+). Deaminates cAMP into cIMP, thereby repressing cAMP dependent metabolism or genes. The sequence is that of Cyclic adenylate deaminase (add) from Leptospira interrogans serogroup Icterohaemorrhagiae serovar copenhageni (strain Fiocruz L1-130).